An 86-amino-acid chain; its full sequence is Small ribosomal subunit protein uS15 (86 aa).

Positions 1 to 22 are disordered; the sequence is MSVDTQKVIEDNKRSAQDTGSP. Residues 7–16 show a composition bias toward basic and acidic residues; that stretch reads KVIEDNKRSA.

The protein belongs to the universal ribosomal protein uS15 family. In terms of assembly, part of the 30S ribosomal subunit. Forms a bridge to the 50S subunit in the 70S ribosome, contacting the 23S rRNA.

Functionally, one of the primary rRNA binding proteins, it binds directly to 16S rRNA where it helps nucleate assembly of the platform of the 30S subunit by binding and bridging several RNA helices of the 16S rRNA. Forms an intersubunit bridge (bridge B4) with the 23S rRNA of the 50S subunit in the ribosome. The polypeptide is Small ribosomal subunit protein uS15 (Xanthomonas campestris pv. campestris (strain 8004)).